The primary structure comprises 780 residues: Chloride channel protein CLC-b (780 aa).

Positions M1 to N28 are disordered. 12 helical membrane passes run T87–V107, G130–V150, F177–L197, L205–R225, G247–L267, A277–I297, V327–Y347, V370–L390, M452–I472, G477–M497, A509–V529, and I530–I550. CBS domains lie at A594–E663 and T708–L770. A helical membrane pass occupies residues H735–T755.

It belongs to the chloride channel (TC 2.A.49) family. Homodimer. Interacts with PP2A5. As to expression, broadly expressed in the plant.

The protein localises to the membrane. Voltage-gated chloride channel. This Arabidopsis thaliana (Mouse-ear cress) protein is Chloride channel protein CLC-b (CLC-B).